The primary structure comprises 185 residues: UPF0301 protein PSHAa2600 (185 aa).

It belongs to the UPF0301 (AlgH) family.

In Pseudoalteromonas translucida (strain TAC 125), this protein is UPF0301 protein PSHAa2600.